The chain runs to 180 residues: Ribulose bisphosphate carboxylase small subunit, chloroplastic 2 (180 aa).

The N-terminal 56 residues, 1–56, are a transit peptide targeting the chloroplast; sequence MASMISSSAVTTVSRASRGQSAAVAPFGGLKSMTGFPVKKVNTDITSITSNGGRVK.

Belongs to the RuBisCO small chain family. In terms of assembly, heterohexadecamer of 8 large and 8 small subunits.

The protein localises to the plastid. It localises to the chloroplast. RuBisCO catalyzes two reactions: the carboxylation of D-ribulose 1,5-bisphosphate, the primary event in carbon dioxide fixation, as well as the oxidative fragmentation of the pentose substrate. Both reactions occur simultaneously and in competition at the same active site. Although the small subunit is not catalytic it is essential for maximal activity. The sequence is that of Ribulose bisphosphate carboxylase small subunit, chloroplastic 2 from Pisum sativum (Garden pea).